The sequence spans 1030 residues: LPS-assembly protein LptD (1030 aa).

The N-terminal stretch at methionine 1 to alanine 32 is a signal peptide. The segment at valine 50–glutamine 213 is disordered. The segment covering leucine 78–serine 91 has biased composition (polar residues). A compositionally biased stretch (acidic residues) spans threonine 126–alanine 137. A compositionally biased stretch (pro residues) spans glycine 161–glutamate 171.

This sequence belongs to the LptD family. As to quaternary structure, component of the lipopolysaccharide transport and assembly complex. Interacts with LptE and LptA.

It localises to the cell outer membrane. Its function is as follows. Together with LptE, is involved in the assembly of lipopolysaccharide (LPS) at the surface of the outer membrane. This Methylococcus capsulatus (strain ATCC 33009 / NCIMB 11132 / Bath) protein is LPS-assembly protein LptD.